Here is a 1485-residue protein sequence, read N- to C-terminus: Formin BNR1 (1485 aa).

Disordered stretches follow at residues 65 to 88 (HLPP…PTLH), 226 to 248 (HDDS…PTET), and 549 to 575 (ANTS…SFDE). Positions 110-636 (NQIPPEEIVD…HVTNESRVIG (527 aa)) constitute a GBD/FH3 domain. Positions 231–248 (TSKLSIESGGSSGAPTET) are enriched in polar residues. Residues 553–564 (LEEDELTPELED) are compositionally biased toward acidic residues. Residues 660–734 (ARRAVAESKM…EQLQSPNNTA (75 aa)) are a coiled coil. A disordered region spans residues 746 to 874 (GNGTVASLKD…GFMNASAPPP (129 aa)). In terms of domain architecture, FH2 spans 953–1368 (VVPSIRPKNK…YEIRKKILED (416 aa)). Coiled coils occupy residues 1240–1312 (HNIS…GELN) and 1351–1382 (QREE…ESAE). Positions 1447-1471 (LKRRMTTRKRTTDGETSPKSEQFMS) are disordered.

The protein belongs to the formin homology family. BNI1 subfamily. In terms of assembly, interacts with IQG1.

The protein localises to the bud neck. Its subcellular location is the cell septum. Its function is as follows. May organize microtubules by mediating spindle positioning and movement in the budding process. Required for cytokinesis and the maintenance of polarized hyphal growth. This is Formin BNR1 (BNR1) from Candida albicans (strain SC5314 / ATCC MYA-2876) (Yeast).